An 84-amino-acid polypeptide reads, in one-letter code: CDC42 small effector protein 2 (84 aa).

2 S-palmitoyl cysteine lipidation sites follow: C10 and C11. The 14-residue stretch at 29–42 folds into the CRIB domain; sequence IGEPTNFVHTAHVG. A phosphoserine mark is found at S43 and S52.

This sequence belongs to the CDC42SE/SPEC family. As to quaternary structure, interacts with CDC42 (in GTP-bound form). Interacts weakly with RAC1 and not at all with RHOA. As to expression, widely expressed. Expressed at higher level in T-lymphocytes. Highly expressed in CCRF-CEM T-lymphocytes, Jurkat T-lymphocytes, and Raji B-lymphocytes compared (at protein level).

Its subcellular location is the cytoplasm. It is found in the cytoskeleton. The protein resides in the cell membrane. The protein localises to the cell projection. It localises to the phagocytic cup. Probably involved in the organization of the actin cytoskeleton by acting downstream of CDC42, inducing actin filament assembly. Alters CDC42-induced cell shape changes. In activated T-cells, may play a role in CDC42-mediated F-actin accumulation at the immunological synapse. May play a role in early contractile events in phagocytosis in macrophages. This is CDC42 small effector protein 2 (CDC42SE2) from Homo sapiens (Human).